Reading from the N-terminus, the 362-residue chain is S-adenosylmethionine decarboxylase proenzyme 2 (362 aa).

Active-site residues include Glu9 and Glu12. Glu68 is a substrate binding site. Catalysis depends on Ser69, which acts as the Schiff-base intermediate with substrate; via pyruvic acid. Position 69 is a pyruvic acid (Ser); by autocatalysis (Ser69). Cys83 acts as the Proton donor; for catalytic activity in catalysis. Residues Ser232 and His245 each act as proton acceptor; for processing activity in the active site. Glu249 provides a ligand contact to substrate.

This sequence belongs to the eukaryotic AdoMetDC family. Requires pyruvate as cofactor. Is synthesized initially as an inactive proenzyme. Formation of the active enzyme involves a self-maturation process in which the active site pyruvoyl group is generated from an internal serine residue via an autocatalytic post-translational modification. Two non-identical subunits are generated from the proenzyme in this reaction, and the pyruvate is formed at the N-terminus of the alpha chain, which is derived from the carboxyl end of the proenzyme. The post-translation cleavage follows an unusual pathway, termed non-hydrolytic serinolysis, in which the side chain hydroxyl group of the serine supplies its oxygen atom to form the C-terminus of the beta chain, while the remainder of the serine residue undergoes an oxidative deamination to produce ammonia and the pyruvoyl group blocking the N-terminus of the alpha chain.

It carries out the reaction S-adenosyl-L-methionine + H(+) = S-adenosyl 3-(methylsulfanyl)propylamine + CO2. It functions in the pathway amine and polyamine biosynthesis; S-adenosylmethioninamine biosynthesis; S-adenosylmethioninamine from S-adenosyl-L-methionine: step 1/1. Functionally, essential for biosynthesis of the polyamines spermidine and spermine. Essential for polyamine homeostasis, and normal plant embryogenesis, growth and development. This Arabidopsis thaliana (Mouse-ear cress) protein is S-adenosylmethionine decarboxylase proenzyme 2.